The following is a 375-amino-acid chain: MSTAGKVIKCRAAVLWEKNKPFSIEEVEVAPPKAYEVRIKIVATGICRSDDHVVNGSIITPLPAILGHEAGGIVESIGEGVTTVKPGDKVIPLFVPQCGKCRACKHPESNLCTHGDLGRAQGTLMDGTSRFTCKGKPIHHFLGVTTFSEYTVVSEISVTKIDAASPLEKVCLIGCGFSTGYGSAVKVGKVARGSICACVWSGRVGLSAIIGCKAAGAARIIAVDINKDKFAKAKELGATECVNPQDYDKPIYEVLQEMTDGGVDFSFEVIGRLDTKVSALMCCQESHGVSVIVGVPPNAQSLTIDPKVLLSGRSWKGAVFGGYKGKDDVPKLVADFMAKKFPLEPLITNVFPLAKINEGFDLLRAGKSIRTVLTF.

Ser2 is subject to N-acetylserine. Residues Cys47, His68, Cys98, Cys101, Cys104, Cys112, and Cys175 each contribute to the Zn(2+) site. Residues 200–205, Asp224, and Lys229 contribute to the NAD(+) site; that span reads WSGRVG. Lys234 is modified (N6-succinyllysine). 293–295 lines the NAD(+) pocket; sequence VGV. N6-succinyllysine is present on Lys340. NAD(+) is bound at residue Arg370.

This sequence belongs to the zinc-containing alcohol dehydrogenase family. Class-I subfamily. As to quaternary structure, homodimer. Zn(2+) serves as cofactor.

Its subcellular location is the cytoplasm. The enzyme catalyses a primary alcohol + NAD(+) = an aldehyde + NADH + H(+). It carries out the reaction a secondary alcohol + NAD(+) = a ketone + NADH + H(+). The polypeptide is Alcohol dehydrogenase 1 (ADH1) (Geomys attwateri (Attwater's pocket gopher)).